We begin with the raw amino-acid sequence, 196 residues long: Orotate phosphoribosyltransferase (196 aa).

117-125 is a 5-phospho-alpha-D-ribose 1-diphosphate binding site; the sequence is EDVVTTGLS. Orotate-binding residues include Thr121 and Arg149.

Belongs to the purine/pyrimidine phosphoribosyltransferase family. PyrE subfamily. In terms of assembly, homodimer. Mg(2+) serves as cofactor.

It carries out the reaction orotidine 5'-phosphate + diphosphate = orotate + 5-phospho-alpha-D-ribose 1-diphosphate. It participates in pyrimidine metabolism; UMP biosynthesis via de novo pathway; UMP from orotate: step 1/2. In terms of biological role, catalyzes the transfer of a ribosyl phosphate group from 5-phosphoribose 1-diphosphate to orotate, leading to the formation of orotidine monophosphate (OMP). This Sphingopyxis alaskensis (strain DSM 13593 / LMG 18877 / RB2256) (Sphingomonas alaskensis) protein is Orotate phosphoribosyltransferase.